Here is a 473-residue protein sequence, read N- to C-terminus: Sorting nexin-17 (473 aa).

A PX domain is found at 1–108 (MHFSIPETEV…SFLRKAQQET (108 aa)). 4 residues coordinate a 1,2-diacyl-sn-glycero-3-phospho-(1D-myo-inositol-3-phosphate): R35, S37, K61, and R74. The Ras-associating domain occupies 114–205 (EEVQLEIYLS…YRIILRKSYW (92 aa)). Residues 114-433 (EEVQLEIYLS…DPNREQVVKL (320 aa)) form an FERM-like region. Positions 269–433 (GYIKFDPCIT…DPNREQVVKL (165 aa)) are PTB-like F3 module. Residues 391-431 (SIKKQMQKKRLNGSLQRSDSQQAVKSPPILDSPDPNREQVV) form a disordered region. Positions 403 to 414 (GSLQRSDSQQAV) are enriched in polar residues.

Belongs to the sorting nexin family. In terms of assembly, monomer. Interacts with CCDC22, CCDC93, DSCR3 and VPS35L; the interaction with DSCR3 is direct and associates SNX17 with the retriever and CCC complexes.

The protein localises to the cytoplasm. Its subcellular location is the early endosome. The protein resides in the cytoplasmic vesicle membrane. Critical regulator of endosomal recycling of numerous surface proteins, including integrins, signaling receptor and channels. Binds to NPxY sequences in the cytoplasmic tails of target cargos. Associates with retriever and CCC complexes to prevent lysosomal degradation and promote cell surface recycling of numerous cargos such as integrins ITGB1, ITGB5 and their associated alpha subunits. Also required for maintenance of normal cell surface levels of APP and LRP1. Interacts with membranes containing phosphatidylinositol 3-phosphate (PtdIns(3P)). This Danio rerio (Zebrafish) protein is Sorting nexin-17 (snx17).